Reading from the N-terminus, the 310-residue chain is Transcription factor UNE12 (310 aa).

Disordered stretches follow at residues 124–156 (HGQP…ATDP) and 229–253 (SSSV…WSND). Residues 152-201 (QATDPHSIAERLRRERIAERIRALQELVPTVNKTDRAAMIDEIVDYVKFL) form the bHLH domain.

As to quaternary structure, homodimer. As to expression, expressed constitutively in roots, leaves, stems, and flowers.

The protein resides in the nucleus. Functionally, required for ovule fertilization. The protein is Transcription factor UNE12 (UNE12) of Arabidopsis thaliana (Mouse-ear cress).